A 219-amino-acid polypeptide reads, in one-letter code: MEAITTNGITLRRTVAAVQGEDALRAMGERIAGALGPAVTEWAITRGELTLVVQGSDIVYALTYLRDEPACAFRCFIDICGVDYPQRARRFDVVYHLLSLRHNMRVRVKVQTDAATPVPSAIPVFPAANWYERETYDLYGILFSGHPDLRRLLTDYGFEGHPLRKDFPLTGFVEVRYDQDEARVVYEPVKLTQEFRNFDFLSPWEGTDYVLPGDEKTSS.

It belongs to the complex I 30 kDa subunit family. NDH-1 is composed of 14 different subunits. Subunits NuoB, C, D, E, F, and G constitute the peripheral sector of the complex.

It localises to the cell inner membrane. It catalyses the reaction a quinone + NADH + 5 H(+)(in) = a quinol + NAD(+) + 4 H(+)(out). Its function is as follows. NDH-1 shuttles electrons from NADH, via FMN and iron-sulfur (Fe-S) centers, to quinones in the respiratory chain. The immediate electron acceptor for the enzyme in this species is believed to be ubiquinone. Couples the redox reaction to proton translocation (for every two electrons transferred, four hydrogen ions are translocated across the cytoplasmic membrane), and thus conserves the redox energy in a proton gradient. This is NADH-quinone oxidoreductase subunit C from Methylorubrum extorquens (strain PA1) (Methylobacterium extorquens).